The primary structure comprises 336 residues: Phosphate acyltransferase (336 aa).

Belongs to the PlsX family. In terms of assembly, homodimer. Probably interacts with PlsY.

It is found in the cytoplasm. The catalysed reaction is a fatty acyl-[ACP] + phosphate = an acyl phosphate + holo-[ACP]. It participates in lipid metabolism; phospholipid metabolism. Its function is as follows. Catalyzes the reversible formation of acyl-phosphate (acyl-PO(4)) from acyl-[acyl-carrier-protein] (acyl-ACP). This enzyme utilizes acyl-ACP as fatty acyl donor, but not acyl-CoA. The polypeptide is Phosphate acyltransferase (Pseudomonas fluorescens (strain ATCC BAA-477 / NRRL B-23932 / Pf-5)).